The primary structure comprises 160 residues: Nucleotide-binding protein Tola_0795 (160 aa).

This sequence belongs to the YajQ family.

Functionally, nucleotide-binding protein. This Tolumonas auensis (strain DSM 9187 / NBRC 110442 / TA 4) protein is Nucleotide-binding protein Tola_0795.